The primary structure comprises 1023 residues: 1-phosphatidylinositol 4,5-bisphosphate phosphodiesterase beta-4 (1023 aa).

A PI-PLC X-box domain is found at 149 to 299 (QEMDHPLAHY…LKRKILIKKQ (151 aa)). Residues His164 and His211 contribute to the active site. Residues 413–529 (LSTMINYAQP…GYLLKPDFMR (117 aa)) form the PI-PLC Y-box domain. In terms of domain architecture, C2 spans 532–657 (DRTFDPFSET…SLRNEGNKPL (126 aa)). Disordered regions lie at residues 711–742 (ADVP…SELR) and 930–958 (KISM…VREL). Composition is skewed to polar residues over residues 729 to 742 (AKAN…SELR) and 933 to 942 (MENSKAISQD). Residue Thr734 is modified to Phosphothreonine. Positions 943–957 (KSIKNKAERERRVRE) are enriched in basic and acidic residues.

It depends on Ca(2+) as a cofactor. In terms of processing, the N-terminus is blocked. As to expression, preferentially expressed in the retina.

Its subcellular location is the cell membrane. The enzyme catalyses a 1,2-diacyl-sn-glycero-3-phospho-(1D-myo-inositol-4,5-bisphosphate) + H2O = 1D-myo-inositol 1,4,5-trisphosphate + a 1,2-diacyl-sn-glycerol + H(+). It carries out the reaction a 1,2-diacyl-sn-glycero-3-phospho-(1D-myo-inositol) + H2O = 1D-myo-inositol 1-phosphate + a 1,2-diacyl-sn-glycerol + H(+). In terms of biological role, activated phosphatidylinositol-specific phospholipase C enzymes catalyze the production of the second messenger molecules diacylglycerol (DAG) and inositol 1,4,5-trisphosphate (IP3) involved in G-protein coupled receptor signaling pathways. PLCB4 is a direct effector of the endothelin receptor signaling pathway that plays an essential role in lower jaw and middle ear structures development. This chain is 1-phosphatidylinositol 4,5-bisphosphate phosphodiesterase beta-4 (PLCB4), found in Bos taurus (Bovine).